A 338-amino-acid chain; its full sequence is 1-aminocyclopropane-1-carboxylate deaminase (338 aa).

Lysine 51 bears the N6-(pyridoxal phosphate)lysine mark. Catalysis depends on serine 78, which acts as the Nucleophile.

This sequence belongs to the ACC deaminase/D-cysteine desulfhydrase family. Homotrimer. Pyridoxal 5'-phosphate serves as cofactor.

It carries out the reaction 1-aminocyclopropane-1-carboxylate + H2O = 2-oxobutanoate + NH4(+). Functionally, catalyzes a cyclopropane ring-opening reaction, the irreversible conversion of 1-aminocyclopropane-1-carboxylate (ACC) to ammonia and alpha-ketobutyrate. Allows growth on ACC as a nitrogen source. In Paracidovorax citrulli (strain AAC00-1) (Acidovorax citrulli), this protein is 1-aminocyclopropane-1-carboxylate deaminase.